The primary structure comprises 176 residues: Lipoprotein signal peptidase (176 aa).

The next 4 helical transmembrane spans lie at 26–46 (LWMAFALLVVVLDQFFKIVIV), 60–80 (FFNLVLVYNKGAAFSFLADAG), 82–102 (WQRWFFTGLGLVVGAFIVWLL), and 107–127 (GQKLFCFAVSLILGGAVGNVV). Residues D137 and D155 contribute to the active site. Residues 147 to 167 (HWPAFNVADCAITVGAVLLIV) traverse the membrane as a helical segment.

It belongs to the peptidase A8 family.

The protein localises to the cell inner membrane. The catalysed reaction is Release of signal peptides from bacterial membrane prolipoproteins. Hydrolyzes -Xaa-Yaa-Zaa-|-(S,diacylglyceryl)Cys-, in which Xaa is hydrophobic (preferably Leu), and Yaa (Ala or Ser) and Zaa (Gly or Ala) have small, neutral side chains.. The protein operates within protein modification; lipoprotein biosynthesis (signal peptide cleavage). Its function is as follows. This protein specifically catalyzes the removal of signal peptides from prolipoproteins. The chain is Lipoprotein signal peptidase from Cupriavidus pinatubonensis (strain JMP 134 / LMG 1197) (Cupriavidus necator (strain JMP 134)).